Here is a 642-residue protein sequence, read N- to C-terminus: Threonine--tRNA ligase (642 aa).

In terms of domain architecture, TGS spans 1-61; sequence MPIITLPDGS…STDSDLSIIT (61 aa). Positions 243-534 are catalytic; it reads DHRKIGKQLD…LIEEYAGKFP (292 aa). Positions 334, 385, and 511 each coordinate Zn(2+).

It belongs to the class-II aminoacyl-tRNA synthetase family. In terms of assembly, homodimer. It depends on Zn(2+) as a cofactor.

It localises to the cytoplasm. The catalysed reaction is tRNA(Thr) + L-threonine + ATP = L-threonyl-tRNA(Thr) + AMP + diphosphate + H(+). Catalyzes the attachment of threonine to tRNA(Thr) in a two-step reaction: L-threonine is first activated by ATP to form Thr-AMP and then transferred to the acceptor end of tRNA(Thr). Also edits incorrectly charged L-seryl-tRNA(Thr). This Shewanella denitrificans (strain OS217 / ATCC BAA-1090 / DSM 15013) protein is Threonine--tRNA ligase.